The sequence spans 426 residues: Aspartate aminotransferase, mitochondrial (426 aa).

Residues 1–29 constitute a mitochondrion transit peptide; the sequence is MIRSARLISNIKFGQKNIRQFSTNTNWWA. Substrate contacts are provided by G60, W156, and N209. The residue at position 273 (K273) is an N6-(pyridoxal phosphate)lysine. Position 401 (R401) interacts with substrate.

The protein belongs to the class-I pyridoxal-phosphate-dependent aminotransferase family. Homodimer. The cofactor is pyridoxal 5'-phosphate.

It localises to the mitochondrion matrix. Its subcellular location is the cell membrane. The catalysed reaction is L-aspartate + 2-oxoglutarate = oxaloacetate + L-glutamate. It carries out the reaction L-kynurenine + 2-oxoglutarate = kynurenate + L-glutamate + H2O. Functionally, plays a key role in amino acid metabolism. Important for metabolite exchange between mitochondria and cytosol. This Dictyostelium discoideum (Social amoeba) protein is Aspartate aminotransferase, mitochondrial (aatA).